Reading from the N-terminus, the 422-residue chain is Histidine--tRNA ligase (422 aa).

Belongs to the class-II aminoacyl-tRNA synthetase family. Homodimer.

The protein resides in the cytoplasm. The enzyme catalyses tRNA(His) + L-histidine + ATP = L-histidyl-tRNA(His) + AMP + diphosphate + H(+). This chain is Histidine--tRNA ligase (hisS), found in Photobacterium profundum (strain SS9).